A 207-amino-acid chain; its full sequence is Uracil phosphoribosyltransferase (207 aa).

Residues R77, R102, and 129 to 137 (DPMLATGGS) contribute to the 5-phospho-alpha-D-ribose 1-diphosphate site. Uracil contacts are provided by residues I192 and 197-199 (GDA). Position 198 (D198) interacts with 5-phospho-alpha-D-ribose 1-diphosphate.

The protein belongs to the UPRTase family. The cofactor is Mg(2+).

The enzyme catalyses UMP + diphosphate = 5-phospho-alpha-D-ribose 1-diphosphate + uracil. It participates in pyrimidine metabolism; UMP biosynthesis via salvage pathway; UMP from uracil: step 1/1. Allosterically activated by GTP. Functionally, catalyzes the conversion of uracil and 5-phospho-alpha-D-ribose 1-diphosphate (PRPP) to UMP and diphosphate. The sequence is that of Uracil phosphoribosyltransferase from Mesoplasma florum (strain ATCC 33453 / NBRC 100688 / NCTC 11704 / L1) (Acholeplasma florum).